We begin with the raw amino-acid sequence, 424 residues long: Histidine--tRNA ligase (424 aa).

Belongs to the class-II aminoacyl-tRNA synthetase family. As to quaternary structure, homodimer.

It localises to the cytoplasm. It carries out the reaction tRNA(His) + L-histidine + ATP = L-histidyl-tRNA(His) + AMP + diphosphate + H(+). This is Histidine--tRNA ligase from Salmonella paratyphi A (strain ATCC 9150 / SARB42).